A 266-amino-acid chain; its full sequence is Early E1A protein (266 aa).

The tract at residues 39–47 (MSLHEMYDL) is interaction with RB1 in competition with E2F1. The PXLXP motif, interaction with host ZMYND11 motif lies at 94–98 (PELQP). The LXCXE motif, interaction with host RB1 motif lies at 103–107 (LFCYE). The segment at 160 to 180 (CSSCDYHRKTSGCPEILCSLC) is a zinc-finger region. A disordered region spans residues 193-244 (VSDSEPDEPDSTTADSNHGSPPTLRCTPPRDLPRPVPVKASPGKRPAVNSLH). A compositionally biased stretch (polar residues) spans 203–212 (STTADSNHGS). The PXDLS motif, CTBP-binding motif lies at 255-259 (PLDLS). The short motif at 261–265 (KRSRS) is the Nuclear localization signal element.

Belongs to the adenoviridae E1A protein family. In terms of assembly, interacts with host UBE2I; this interaction interferes with polySUMOylation. Interacts with host RB1; this interaction induces the aberrant dissociation of RB1-E2F1 complex thereby disrupting the activity of RB1 and activating E2F1-regulated genes. Interacts with host ATF7; the interaction enhances ATF7-mediated viral transactivation activity which requires the zinc binding domains of both proteins. Isoform early E1A 32 kDa protein and isoform early E1A 26 kDa protein interact (via N-terminus) with CUL1 and E3 ubiquitin ligase RBX1; these interactions inhibit RBX1-CUL1-dependent elongation reaction of ubiquitin chains and attenuate ubiquitination of SCF(FBXW7) target proteins. Interacts (via PXLXP motif) with host ZMYND11/BS69 (via MYND-type zinc finger); this interaction inhibits E1A mediated transactivation. Interacts with host EP300; this interaction stimulates the acetylation of RB1 by recruiting EP300 and RB1 into a multimeric-protein complex. Interacts with host CTBP1 and CTBP2; this interaction seems to potentiate viral replication. Interacts with host DCAF7. Interacts with host DYRK1A. Interacts with host KPNA4; this interaction allows E1A import into the host nucleus. Interacts with host EP400; this interaction stabilizes MYC. Interacts with host TBP protein; this interaction probably disrupts the TBP-TATA complex.

It is found in the host nucleus. Its function is as follows. Plays a role in viral genome replication by driving entry of quiescent cells into the cell cycle. Stimulation of progression from G1 to S phase allows the virus to efficiently use the cellular DNA replicating machinery to achieve viral genome replication. E1A protein has both transforming and trans-activating activities. Induces the disassembly of the E2F1 transcription factor from RB1 by direct competition for the same binding site on RB1, with subsequent transcriptional activation of E2F1-regulated S-phase genes and of the E2 region of the adenoviral genome. Release of E2F1 leads to the ARF-mediated inhibition of MDM2 and causes TP53/p53 to accumulate because it is not targeted for degradation by MDM2-mediated ubiquitination anymore. This increase in TP53, in turn, would arrest the cell proliferation and direct its death but this effect is counteracted by the viral protein E1B-55K. Inactivation of the ability of RB1 to arrest the cell cycle is critical for cellular transformation, uncontrolled cellular growth and proliferation induced by viral infection. Interaction with RBX1 and CUL1 inhibits ubiquitination of the proteins targeted by SCF(FBXW7) ubiquitin ligase complex, and may be linked to unregulated host cell proliferation. The tumorigenesis-restraining activity of E1A may be related to the disruption of the host CtBP-CtIP complex through the CtBP binding motif. The polypeptide is Early E1A protein (Simian adenovirus serotype 7 (SAdV-7)).